Consider the following 268-residue polypeptide: Large ribosomal subunit protein uL4 (268 aa).

Belongs to the universal ribosomal protein uL4 family. Part of the 50S ribosomal subunit.

Its function is as follows. One of the primary rRNA binding proteins, this protein initially binds near the 5'-end of the 23S rRNA. It is important during the early stages of 50S assembly. It makes multiple contacts with different domains of the 23S rRNA in the assembled 50S subunit and ribosome. In terms of biological role, forms part of the polypeptide exit tunnel. This Nanoarchaeum equitans (strain Kin4-M) protein is Large ribosomal subunit protein uL4.